The primary structure comprises 406 residues: MIKSILDNDLYKFTMQMAVLELFPKAEAEYRFTNRGLQRFSREFVEELRRVIDEEISGLRLTEEEYRWLGEKCPFLKPMYLEYLKNFRFKPEEVEICLTRENDLDMRIKGPWHSTILWEIVLMAAVSELYFTTIEKEWNGSTKNPGTPESATLESVLEAYGEKILEIGKVLEENGCLFSEFGTRRRRSFELHDQVMRSLVRIKTLTGTSNVYFAKKYGVKPIGTVGHEWIMGTSALVGLRYANRFAFENWVDVYNGDLGIALTDTFGSEAFFKDMDLKLSKIYDGFRHDSGDPYTFVDRVIEHYGKMGIDPMKKVIVFSDALNAEAAVKLKKYCEGKINCSFGIGTSLTNNSEFFRESPPLNMVIKLHSINGIPVVKLSDSPEKETGERDALRVANYIVGRKGLDE.

His-227 carries the post-translational modification Phosphohistidine; by autocatalysis.

The protein belongs to the NAPRTase family. Post-translationally, transiently phosphorylated on a His residue during the reaction cycle. Phosphorylation strongly increases the affinity for substrates and increases the rate of nicotinate D-ribonucleotide production. Dephosphorylation regenerates the low-affinity form of the enzyme, leading to product release.

It catalyses the reaction nicotinate + 5-phospho-alpha-D-ribose 1-diphosphate + ATP + H2O = nicotinate beta-D-ribonucleotide + ADP + phosphate + diphosphate. The protein operates within cofactor biosynthesis; NAD(+) biosynthesis; nicotinate D-ribonucleotide from nicotinate: step 1/1. In terms of biological role, catalyzes the synthesis of beta-nicotinate D-ribonucleotide from nicotinate and 5-phospho-D-ribose 1-phosphate at the expense of ATP. In Methanosarcina mazei (strain ATCC BAA-159 / DSM 3647 / Goe1 / Go1 / JCM 11833 / OCM 88) (Methanosarcina frisia), this protein is Nicotinate phosphoribosyltransferase.